The primary structure comprises 316 residues: MNQLDGIKQFTTVVADSGDIESIRHYQPQDATTNPSLLLKAAGLEQYGHLIEDAIAWGKKHGGTQEQQVAAASDKLAVNFGAEILKSIPGRVSTEVDARLSFDKEKSIEKARHLVDLYQQQDVDKSRILIKLAATWEGIRAAEQLEKEGINCNLTLLFSFAQARACAEAGVYLISPFVGRIYDWYQARSPLEPYVVEEDPGVKSVRNIYDYFKQHRYETIVMGASFRRTEQILALTGCDRLTISPNLLKELKEKEEPVIRKLVPSSQMFHRPTPMTEAEFRWEHNQDAMAVEKLSEGIRLFAVDQRKLEDLLAAKL.

Residue Lys-131 is the Schiff-base intermediate with substrate of the active site.

The protein belongs to the transaldolase family. Type 1 subfamily. Homodimer.

The protein resides in the cytoplasm. The catalysed reaction is D-sedoheptulose 7-phosphate + D-glyceraldehyde 3-phosphate = D-erythrose 4-phosphate + beta-D-fructose 6-phosphate. Its pathway is carbohydrate degradation; pentose phosphate pathway; D-glyceraldehyde 3-phosphate and beta-D-fructose 6-phosphate from D-ribose 5-phosphate and D-xylulose 5-phosphate (non-oxidative stage): step 2/3. In terms of biological role, transaldolase is important for the balance of metabolites in the pentose-phosphate pathway. The protein is Transaldolase 2 of Salmonella choleraesuis (strain SC-B67).